The chain runs to 349 residues: Aspartate-semialdehyde dehydrogenase (349 aa).

NADP(+) contacts are provided by residues 12-15 (TGSV) and 39-40 (NS). Residue Arg-113 participates in phosphate binding. Residue Cys-148 is the Acyl-thioester intermediate of the active site. Substrate is bound at residue Gln-175. 178 to 179 (SG) serves as a coordination point for NADP(+). Glu-201 serves as a coordination point for substrate. Lys-204 contacts phosphate. Arg-234 is a binding site for substrate. His-241 serves as the catalytic Proton acceptor. Residue 326–327 (NT) participates in NADP(+) binding.

Belongs to the aspartate-semialdehyde dehydrogenase family. As to quaternary structure, homodimer.

The enzyme catalyses L-aspartate 4-semialdehyde + phosphate + NADP(+) = 4-phospho-L-aspartate + NADPH + H(+). It functions in the pathway amino-acid biosynthesis; L-lysine biosynthesis via DAP pathway; (S)-tetrahydrodipicolinate from L-aspartate: step 2/4. It participates in amino-acid biosynthesis; L-methionine biosynthesis via de novo pathway; L-homoserine from L-aspartate: step 2/3. The protein operates within amino-acid biosynthesis; L-threonine biosynthesis; L-threonine from L-aspartate: step 2/5. Functionally, catalyzes the NADPH-dependent formation of L-aspartate-semialdehyde (L-ASA) by the reductive dephosphorylation of L-aspartyl-4-phosphate. The polypeptide is Aspartate-semialdehyde dehydrogenase (Leptospira interrogans serogroup Icterohaemorrhagiae serovar Lai (strain 56601)).